Consider the following 246-residue polypeptide: Small ribosomal subunit protein uS2 (246 aa).

Belongs to the universal ribosomal protein uS2 family.

The sequence is that of Small ribosomal subunit protein uS2 from Pseudomonas paraeruginosa (strain DSM 24068 / PA7) (Pseudomonas aeruginosa (strain PA7)).